The primary structure comprises 408 residues: E3 ubiquitin-protein ligase At1g12760 (408 aa).

A disordered region spans residues 1-52; it reads MSTETTTGNSSLIPASSSSSSSDAIDPAPLLFNGDDNEGNNGGGGGERRSVR. The segment covering 10–34 has biased composition (low complexity); that stretch reads SSLIPASSSSSSSDAIDPAPLLFNG. A run of 2 helical transmembrane segments spans residues 100–120 and 133–153; these read VVVL…AILV and VWLL…CVEY. Positions 160–195 are disordered; it reads RTNRTTTTTPPRSRSSSSSSSSSSLEEEALGSRRNS. Positions 163–183 are enriched in low complexity; it reads RTTTTTPPRSRSSSSSSSSSS. The next 3 membrane-spanning stretches (helical) occupy residues 219-239, 254-274, and 275-295; these read ANTM…SAGG, IVFL…ACVI, and GIAV…VADQ. Residues 353–394 form an RING-type; atypical zinc finger; that stretch reads CCICLSAYEDGTELRELPCGHHFHCSCVDKWLYINATCPLCK.

It localises to the membrane. The catalysed reaction is S-ubiquitinyl-[E2 ubiquitin-conjugating enzyme]-L-cysteine + [acceptor protein]-L-lysine = [E2 ubiquitin-conjugating enzyme]-L-cysteine + N(6)-ubiquitinyl-[acceptor protein]-L-lysine.. Its pathway is protein modification; protein ubiquitination. In terms of biological role, mediates E2-dependent protein ubiquitination in vitro. In Arabidopsis thaliana (Mouse-ear cress), this protein is E3 ubiquitin-protein ligase At1g12760.